A 437-amino-acid chain; its full sequence is Keratin, type I cytoskeletal 13 (437 aa).

Residues 1-95 (MSCRFQSSSM…GVDGGLLSGN (95 aa)) are head. Omega-N-methylarginine occurs at positions 27 and 35. The interval 96 to 131 (EKITMQNLNDRLASYLDKVRALEAANADLEVKIRDW) is coil 1A. The IF rod domain maps to 96–408 (EKITMQNLND…SLLEGQDAKM (313 aa)). The linker 1 stretch occupies residues 132–150 (HLKQSPASPERDYSAYYKT). The interval 151–242 (IEELRIKILE…KNHEEEMKEF (92 aa)) is coil 1B. Positions 243 to 265 (SNQVVGQVNVEMDATPGIDLTRV) are linker 12. A coil 2 region spans residues 266-404 (LAEMREQYEA…ATYRSLLEGQ (139 aa)). Residues 405–437 (DAKMTGFNSGGNNTTTSNGSPSSNSGRPDFRKY) form a tail region. The disordered stretch occupies residues 408–437 (MTGFNSGGNNTTTSNGSPSSNSGRPDFRKY). The span at 409–430 (TGFNSGGNNTTTSNGSPSSNSG) shows a compositional bias: low complexity.

The protein belongs to the intermediate filament family. As to quaternary structure, heterotetramer of two type I and two type II keratins. O-glycosylated; glycans consist of single N-acetylglucosamine residues. In terms of tissue distribution, expressed in tongue epithelia (at protein level). Expressed in upper suprabasal layers of the corneal epithelium (at protein level).

Type 1 keratin. Maintains postnatal tongue mucosal cell homeostasis and tissue organization in response to mechanical stress, potentially via regulation of the G1/S phase cyclins CCNE1 and CCNE2. This is Keratin, type I cytoskeletal 13 (Krt13) from Mus musculus (Mouse).